Reading from the N-terminus, the 556-residue chain is Trigger factor (556 aa).

Residues 169 to 255 (GDVVVIDFAA…LREIKAKELP (87 aa)) form the PPIase FKBP-type domain. The span at 438–452 (VDSEGNPTQAPTSLA) shows a compositional bias: polar residues. The segment at 438 to 556 (VDSEGNPTQA…KPSKKDKKGK (119 aa)) is disordered. Positions 461 to 472 (PEAEFEADEPEA) are enriched in acidic residues. 2 stretches are compositionally biased toward low complexity: residues 486–503 (ETAT…AEAE) and 511–526 (EASP…AEAT).

This sequence belongs to the FKBP-type PPIase family. Tig subfamily.

It is found in the cytoplasm. The enzyme catalyses [protein]-peptidylproline (omega=180) = [protein]-peptidylproline (omega=0). Functionally, involved in protein export. Acts as a chaperone by maintaining the newly synthesized protein in an open conformation. Functions as a peptidyl-prolyl cis-trans isomerase. The polypeptide is Trigger factor (Synechococcus sp. (strain JA-2-3B'a(2-13)) (Cyanobacteria bacterium Yellowstone B-Prime)).